Consider the following 810-residue polypeptide: Janus kinase and microtubule-interacting protein 2 (810 aa).

Coiled coils occupy residues 13–102 (EALI…EMSR), 148–178 (ERLKLLQEIADLKTAKKQVDEALSNMIQADK), and 207–244 (RRLMDEIKAKDRIIFSLEKELETQTGYVQKLQLQKEAL). The segment covering 261–274 (PKREIPGRAGDGSE) has biased composition (basic and acidic residues). 2 disordered regions span residues 261 to 280 (PKREIPGRAGDGSEHCSSPD) and 437 to 465 (YDEDSMDSETSSMASFRTDRTPATPDDDL). Residues 280 to 419 (DLRRNQKRIA…REKLIRRRKH (140 aa)) adopt a coiled-coil conformation. Coiled-coil stretches lie at residues 468 to 597 (SLAA…RERR) and 664 to 808 (EKWI…SNRK).

It belongs to the JAKMIP family. As to expression, highly expressed in brain, moderately expressed in thymus, spleen and lung, and weakly expressed in kidney, liver and peripheral blood lymphocytes. Also expressed in adrenal and pituitary glands, as well as testis.

Its subcellular location is the golgi apparatus. This chain is Janus kinase and microtubule-interacting protein 2 (JAKMIP2), found in Homo sapiens (Human).